The sequence spans 693 residues: CREB-regulated transcription coactivator 2 (693 aa).

Over residues 1–20 the composition is skewed to polar residues; sequence MATSGANGPGSATASASNPR. Positions 1–30 are disordered; the sequence is MATSGANGPGSATASASNPRKFSEKIALQK. Position 2 is an N-acetylalanine (Ala2). Arg51 bears the Asymmetric dimethylarginine; by PRMT6 mark. Ser70, Ser86, and Ser90 each carry phosphoserine. Arg99, Arg120, and Arg123 each carry asymmetric dimethylarginine; by PRMT6. The residue at position 136 (Ser136) is a Phosphoserine. Asymmetric dimethylarginine; by PRMT6 occurs at positions 161 and 168. Phosphothreonine is present on Thr169. Ser171 is modified (phosphoserine; by AMPK, MARK2, SIK1 and SIK2). Position 192 is a phosphothreonine (Thr192). A Glycyl lysine isopeptide (Lys-Gly) (interchain with G-Cter in SUMO2) cross-link involves residue Lys234. Residues 271–287 carry the Nuclear export signal motif; it reads TGGSLPDLTNLHFPPPL. Residue Ser274 is modified to Phosphoserine; by MARK2. Disordered stretches follow at residues 282–306 and 328–554; these read HFPP…GGNS and GYDA…MSDF. 5 positions are modified to phosphoserine: Ser306, Ser368, Ser393, Ser433, and Ser456. Composition is skewed to low complexity over residues 331 to 378 and 386 to 415; these read APGL…SSLA and SLGH…GAPS. Residues 447-468 are compositionally biased toward polar residues; it reads SQQQLPKQFSPTMSPTLSSITQ. Tyr488 is modified (phosphotyrosine). 3 positions are modified to phosphoserine: Ser489, Ser490, and Ser492. Residues 498-507 are compositionally biased toward polar residues; the sequence is QPHTPKSLQQ. Thr501 carries the phosphothreonine modification. Over residues 509 to 529 the composition is skewed to low complexity; that stretch reads GLPSQSCSVQSSGGQPPGRQS. Ser613, Ser623, and Ser624 each carry phosphoserine.

The protein belongs to the TORC family. As to quaternary structure, binds, as a tetramer, through its N-terminal region, with the bZIP domain of CREB1. 'Arg-314' in the bZIP domain of CREB1 is essential for this interaction. Interaction, via its C-terminal, with TAF4, enhances recruitment of TAF4 to CREB1. Interacts with SIK2. Interacts with 14-3-3 proteins, YWHAB and YWHAG. Interacts (probably when phosphorylated at Ser-171) with YWHAE. Interacts with calmodulin-dependent catalytic subunit PPP3CA/calcineurin A. Interaction with COP1 mediates nuclear export and degradation of CRTC2. (Microbial infection) Interaction with the human T-cell leukemia virus type 1 (HTLV-1) Tax protein is essential for optimal transcription activation by Tax. In terms of processing, phosphorylation/dephosphorylation states of Ser-171 are required for regulating transduction of CREB activity. CRTCs/TORCs are inactive when phosphorylated, and active when dephosphorylated at this site. This primary site of phosphorylation, is regulated by cAMP and calcium levels and is dependent on the phosphorylation of SIKs (SIK1 and SIK2) by LKB1. Following adenylyl cyclase activation, dephosphorylated at Ser-171 by PPP3CA/calcineurin A resulting in CRTC2 dissociation from 14-3-3 proteins and PPP3CA. Both insulin and AMPK increase this phosphorylation of CRTC2 while glucagon suppresses it. Phosphorylation at Ser-274 by MARK2 is induced under low glucose conditions and dephosphorylated in response to glucose influx. Phosphorylation at Ser-274 promotes interaction with 14-3-3 proteins and translocation to the cytoplasm. Asymmetric dimethylation of arginine resisues by PRMT6 enhances the association of CRTC2 with CREB on the promoters of gluconeogenic genes. In terms of tissue distribution, most abundantly expressed in the thymus. Present in both B and T-lymphocytes. Highly expressed in HEK293T cells and in insulinomas. High levels also in spleen, ovary, muscle and lung, with highest levels in muscle. Lower levels found in brain, colon, heart, kidney, prostate, small intestine and stomach. Weak expression in liver and pancreas.

The protein localises to the cytoplasm. Its subcellular location is the nucleus. Transcriptional coactivator for CREB1 which activates transcription through both consensus and variant cAMP response element (CRE) sites. Acts as a coactivator, in the SIK/TORC signaling pathway, being active when dephosphorylated and acts independently of CREB1 'Ser-133' phosphorylation. Enhances the interaction of CREB1 with TAF4. Regulates gluconeogenesis as a component of the LKB1/AMPK/TORC2 signaling pathway. Regulates the expression of specific genes such as the steroidogenic gene, StAR. Potent coactivator of PPARGC1A and inducer of mitochondrial biogenesis in muscle cells. Also coactivator for TAX activation of the human T-cell leukemia virus type 1 (HTLV-1) long terminal repeats (LTR). This chain is CREB-regulated transcription coactivator 2 (CRTC2), found in Homo sapiens (Human).